The primary structure comprises 40 residues: Photosystem II reaction center protein J (40 aa).

Residues I8 to F28 form a helical membrane-spanning segment.

Belongs to the PsbJ family. In terms of assembly, PSII is composed of 1 copy each of membrane proteins PsbA, PsbB, PsbC, PsbD, PsbE, PsbF, PsbH, PsbI, PsbJ, PsbK, PsbL, PsbM, PsbT, PsbX, PsbY, PsbZ, Psb30/Ycf12, at least 3 peripheral proteins of the oxygen-evolving complex and a large number of cofactors. It forms dimeric complexes.

It localises to the plastid. It is found in the chloroplast thylakoid membrane. Functionally, one of the components of the core complex of photosystem II (PSII). PSII is a light-driven water:plastoquinone oxidoreductase that uses light energy to abstract electrons from H(2)O, generating O(2) and a proton gradient subsequently used for ATP formation. It consists of a core antenna complex that captures photons, and an electron transfer chain that converts photonic excitation into a charge separation. The chain is Photosystem II reaction center protein J from Nandina domestica (Heavenly bamboo).